Reading from the N-terminus, the 416-residue chain is Solute carrier family 35 member D3 (416 aa).

Transmembrane regions (helical) follow at residues 9 to 29 (VLGI…NILL), 38 to 58 (FSFL…SLEL), 64 to 84 (LIAV…VAVL), 103 to 123 (MYVV…VLVL), 131 to 151 (GVLA…AGDL), 155 to 175 (PIGY…LVLI), 187 to 207 (LTAQ…CSFA), 224 to 244 (AMVC…FTTL), 257 to 277 (FVGV…FSDV), and 280 to 300 (TSLF…YCVA). Positions 334–384 (MEELPGEGGNGRSEGGEAAGGPAQESRQEVRGSPRGVPLVAGSSEEGSRRS) are disordered. The segment covering 339-352 (GEGGNGRSEGGEAA) has biased composition (gly residues).

Belongs to the TPT transporter family. SLC35D subfamily. Could interact with ATG14, BECN1 and PIK3C3 that form the PI3KC3-C1/AIC/autophagy initiation complex; enhancing the formation of the AIC and promoting autophagy.

It localises to the cytoplasmic vesicle. It is found in the secretory vesicle. The protein localises to the synaptic vesicle membrane. The protein resides in the early endosome membrane. Its subcellular location is the endoplasmic reticulum membrane. It carries out the reaction UDP-alpha-D-glucose(in) = UDP-alpha-D-glucose(out). Its activity is regulated as follows. Inhibited by proton uncouplers that directly abolish the proton electrochemical gradient. Functionally, probable UDP-glucose transmembrane transporter involved in UDP-glucose transport from the cytosol to the lumen of synaptic vesicles. It is involved in platelet dense granules maturation. Alternatively, could function as a molecular adapter enhancing the formation of the PI3KC3-C1/AIC/autophagy initiation complex to promote autophagy in dopaminergic neurons. Could also regulate the plasma membrane localization of the D(1A) dopamine receptor/DRD1 and dopamine signaling. The protein is Solute carrier family 35 member D3 of Homo sapiens (Human).